Here is a 353-residue protein sequence, read N- to C-terminus: Photosystem II protein D1 (353 aa).

Thr2 carries the N-acetylthreonine modification. Residue Thr2 is modified to Phosphothreonine. 3 helical membrane-spanning segments follow: residues 29-46 (YIGW…TATS), 118-133 (HFLL…EWEL), and 142-156 (WIAV…AATA). His118 lines the chlorophyll a pocket. Residue Tyr126 coordinates pheophytin a. Positions 170 and 189 each coordinate [CaMn4O5] cluster. Residues 197–218 (FHMLGVAGVFGGSLFSAMHGSL) traverse the membrane as a helical segment. His198 contacts chlorophyll a. His215 serves as a coordination point for a quinone. Fe cation is bound by residues His215 and His272. Residues 274-288 (FLAAWPVVGIWFTAL) traverse the membrane as a helical segment. Residues His332, Glu333, Asp342, and Ala344 each contribute to the [CaMn4O5] cluster site. Positions 345 to 353 (AVEAPSING) are excised as a propeptide.

This sequence belongs to the reaction center PufL/M/PsbA/D family. PSII is composed of 1 copy each of membrane proteins PsbA, PsbB, PsbC, PsbD, PsbE, PsbF, PsbH, PsbI, PsbJ, PsbK, PsbL, PsbM, PsbT, PsbX, PsbY, PsbZ, Psb30/Ycf12, at least 3 peripheral proteins of the oxygen-evolving complex and a large number of cofactors. It forms dimeric complexes. The D1/D2 heterodimer binds P680, chlorophylls that are the primary electron donor of PSII, and subsequent electron acceptors. It shares a non-heme iron and each subunit binds pheophytin, quinone, additional chlorophylls, carotenoids and lipids. D1 provides most of the ligands for the Mn4-Ca-O5 cluster of the oxygen-evolving complex (OEC). There is also a Cl(-1) ion associated with D1 and D2, which is required for oxygen evolution. The PSII complex binds additional chlorophylls, carotenoids and specific lipids. serves as cofactor. In terms of processing, tyr-161 forms a radical intermediate that is referred to as redox-active TyrZ, YZ or Y-Z. Post-translationally, C-terminally processed by CTPA; processing is essential to allow assembly of the oxygen-evolving complex and thus photosynthetic growth.

The protein resides in the plastid. It localises to the chloroplast thylakoid membrane. The catalysed reaction is 2 a plastoquinone + 4 hnu + 2 H2O = 2 a plastoquinol + O2. In terms of biological role, photosystem II (PSII) is a light-driven water:plastoquinone oxidoreductase that uses light energy to abstract electrons from H(2)O, generating O(2) and a proton gradient subsequently used for ATP formation. It consists of a core antenna complex that captures photons, and an electron transfer chain that converts photonic excitation into a charge separation. The D1/D2 (PsbA/PsbD) reaction center heterodimer binds P680, the primary electron donor of PSII as well as several subsequent electron acceptors. This is Photosystem II protein D1 from Brassica napus (Rape).